The primary structure comprises 181 residues: NADH-quinone oxidoreductase subunit I (181 aa).

4Fe-4S ferredoxin-type domains follow at residues Leu-44–Ala-74 and Arg-90–Asp-119. Residues Cys-54, Cys-57, Cys-60, Cys-64, Cys-99, Cys-102, Cys-105, and Cys-109 each coordinate [4Fe-4S] cluster.

It belongs to the complex I 23 kDa subunit family. In terms of assembly, NDH-1 is composed of 14 different subunits. Subunits NuoA, H, J, K, L, M, N constitute the membrane sector of the complex. It depends on [4Fe-4S] cluster as a cofactor.

It is found in the cell membrane. It catalyses the reaction a quinone + NADH + 5 H(+)(in) = a quinol + NAD(+) + 4 H(+)(out). NDH-1 shuttles electrons from NADH, via FMN and iron-sulfur (Fe-S) centers, to quinones in the respiratory chain. The immediate electron acceptor for the enzyme in this species is believed to be menaquinone. Couples the redox reaction to proton translocation (for every two electrons transferred, four hydrogen ions are translocated across the cytoplasmic membrane), and thus conserves the redox energy in a proton gradient. The polypeptide is NADH-quinone oxidoreductase subunit I (Mycobacterium marinum (strain ATCC BAA-535 / M)).